Reading from the N-terminus, the 337-residue chain is Large ribosomal subunit protein uL3 (337 aa).

Positions 1-29 are disordered; that stretch reads MARHHQPRKGSVAFSPRKRAARETPRVKS.

Belongs to the universal ribosomal protein uL3 family. In terms of assembly, part of the 50S ribosomal subunit. Forms a cluster with proteins L14 and L24e.

Functionally, one of the primary rRNA binding proteins, it binds directly near the 3'-end of the 23S rRNA, where it nucleates assembly of the 50S subunit. This chain is Large ribosomal subunit protein uL3, found in Methanothermobacter thermautotrophicus (strain ATCC 29096 / DSM 1053 / JCM 10044 / NBRC 100330 / Delta H) (Methanobacterium thermoautotrophicum).